The sequence spans 854 residues: Zinc finger protein 341 (854 aa).

The C2H2-type 1; atypical zinc finger occupies 53-76 (FLCGKCKKQFNSLPAFMTHKREQC). The segment at 152–217 (DQPMPQGPPP…GRPNPGGNGV (66 aa)) is disordered. The segment covering 163-176 (QSSLNMHSVPSYLT) has biased composition (polar residues). Over residues 177–210 (QPPPPPPPPPPLPPPPPPQPPPPPPQSLGPPGRP) the composition is skewed to pro residues. 2 consecutive C2H2-type zinc fingers follow at residues 322–344 (LKCSYCDKSFTKNFDLQQHIRSH) and 350–372 (FQCIACGRAFAQKSNVKKHMQTH). A disordered region spans residues 399–434 (SRQEDEESTGLGQPLPGAPQPQALSTAGEEEGDKPE). A compositionally biased stretch (low complexity) spans 408-422 (GLGQPLPGAPQPQAL). 9 C2H2-type zinc fingers span residues 445–467 (YLCQFCPSKFSTYFQLKSHMTQH), 473–497 (YKCVVKSCAQTFPKLDTFLEHIKSH), 503–525 (YRCHLCGKDFPSLYDLGVHQYSH), 540–564 (YKCVKCVNKYSTPEALEHHLQTATH), 566–588 (FPCPHCQKVFPCERYLRRHLPTH), 594–616 (FKCQVCKKFFRREHYLKLHAHIH), 622–644 (YKCSVCESAFNRKDKLKRHMLIH), 650–677 (YKCPFSTHTGCSKEFNRPDKLKAHILSH), and 683–705 (HKCALCSKSFSRRAHLAEHQRAH). The segment at 731–763 (CRLGPQKDKDLQTRRPPQRRAAPRSCGSGGRKV) is disordered.

Belongs to the krueppel C2H2-type zinc-finger protein family. In terms of assembly, binds DNA and to the STAT3 promoter.

Its subcellular location is the nucleus. In terms of biological role, transcriptional activator of STAT3 involved in the regulation of immune homeostasis. Also able to activate STAT1 transcription. This Homo sapiens (Human) protein is Zinc finger protein 341 (ZNF341).